Consider the following 703-residue polypeptide: 1,4-alpha-glucan-branching enzyme (703 aa).

Residues W93 and K130 each coordinate (1,4-alpha-D-glucosyl)n. Residue D355 is the Nucleophile of the active site. The Proton donor role is filled by E415.

This sequence belongs to the glycosyl hydrolase 13 family. GlgB subfamily.

Its subcellular location is the cytoplasm. It catalyses the reaction Transfers a segment of a (1-&gt;4)-alpha-D-glucan chain to a primary hydroxy group in a similar glucan chain.. It functions in the pathway glycan biosynthesis; glycogen biosynthesis. In terms of biological role, glycogen-branching enzyme participates in the glycogen biosynthetic process along with glycogenin and glycogen synthase. Generates alpha-1,6-glucosidic branches from alpha-1,4-linked glucose chains, to increase solubility of the glycogen polymer. This Eremothecium gossypii (strain ATCC 10895 / CBS 109.51 / FGSC 9923 / NRRL Y-1056) (Yeast) protein is 1,4-alpha-glucan-branching enzyme (GLC3).